Consider the following 248-residue polypeptide: 2,3-bisphosphoglycerate-dependent phosphoglycerate mutase (248 aa).

Substrate-binding positions include 7-14 (RHGESIWN), 20-21 (TG), Arg-59, 86-89 (ERHY), Lys-97, 113-114 (RR), and 182-183 (GN). Residue His-8 is the Tele-phosphohistidine intermediate of the active site. The Proton donor/acceptor role is filled by Glu-86.

It belongs to the phosphoglycerate mutase family. BPG-dependent PGAM subfamily.

It carries out the reaction (2R)-2-phosphoglycerate = (2R)-3-phosphoglycerate. It participates in carbohydrate degradation; glycolysis; pyruvate from D-glyceraldehyde 3-phosphate: step 3/5. Functionally, catalyzes the interconversion of 2-phosphoglycerate and 3-phosphoglycerate. The sequence is that of 2,3-bisphosphoglycerate-dependent phosphoglycerate mutase from Methylacidiphilum infernorum (isolate V4) (Methylokorus infernorum (strain V4)).